We begin with the raw amino-acid sequence, 691 residues long: DNA ligase (691 aa).

NAD(+) is bound by residues 36-40 (DAEYD), 85-86 (SL), and glutamate 118. The N6-AMP-lysine intermediate role is filled by lysine 120. 4 residues coordinate NAD(+): arginine 141, glutamate 178, lysine 295, and lysine 319. Cysteine 413, cysteine 416, cysteine 431, and cysteine 437 together coordinate Zn(2+). A BRCT domain is found at 595 to 684 (GRPQPLAGQT…ESASSEDAQP (90 aa)).

This sequence belongs to the NAD-dependent DNA ligase family. LigA subfamily. Mg(2+) is required as a cofactor. Mn(2+) serves as cofactor.

The enzyme catalyses NAD(+) + (deoxyribonucleotide)n-3'-hydroxyl + 5'-phospho-(deoxyribonucleotide)m = (deoxyribonucleotide)n+m + AMP + beta-nicotinamide D-nucleotide.. Functionally, DNA ligase that catalyzes the formation of phosphodiester linkages between 5'-phosphoryl and 3'-hydroxyl groups in double-stranded DNA using NAD as a coenzyme and as the energy source for the reaction. It is essential for DNA replication and repair of damaged DNA. The protein is DNA ligase of Chromohalobacter salexigens (strain ATCC BAA-138 / DSM 3043 / CIP 106854 / NCIMB 13768 / 1H11).